Here is a 483-residue protein sequence, read N- to C-terminus: ATP synthase subunit beta (483 aa).

169 to 176 lines the ATP pocket; the sequence is GGAGVGKT.

It belongs to the ATPase alpha/beta chains family. As to quaternary structure, F-type ATPases have 2 components, CF(1) - the catalytic core - and CF(0) - the membrane proton channel. CF(1) has five subunits: alpha(3), beta(3), gamma(1), delta(1), epsilon(1). CF(0) has three main subunits: a(1), b(2) and c(9-12). The alpha and beta chains form an alternating ring which encloses part of the gamma chain. CF(1) is attached to CF(0) by a central stalk formed by the gamma and epsilon chains, while a peripheral stalk is formed by the delta and b chains.

The protein resides in the cell membrane. It catalyses the reaction ATP + H2O + 4 H(+)(in) = ADP + phosphate + 5 H(+)(out). Its function is as follows. Produces ATP from ADP in the presence of a proton gradient across the membrane. The catalytic sites are hosted primarily by the beta subunits. This Corynebacterium glutamicum (strain R) protein is ATP synthase subunit beta.